The following is a 133-amino-acid chain: Ribosome-binding factor A (133 aa).

It belongs to the RbfA family. Monomer. Binds 30S ribosomal subunits, but not 50S ribosomal subunits or 70S ribosomes.

It localises to the cytoplasm. In terms of biological role, one of several proteins that assist in the late maturation steps of the functional core of the 30S ribosomal subunit. Associates with free 30S ribosomal subunits (but not with 30S subunits that are part of 70S ribosomes or polysomes). Required for efficient processing of 16S rRNA. May interact with the 5'-terminal helix region of 16S rRNA. The sequence is that of Ribosome-binding factor A from Yersinia enterocolitica.